The sequence spans 410 residues: Interleukin-1 receptor type 2 (410 aa).

The first 13 residues, 1–13 (MFILLVLVTGVSA), serve as a signal peptide directing secretion. Residues 14–355 (FTTPTVVHTG…SQSLHTTVKE (342 aa)) are Extracellular-facing. Ig-like C2-type domains follow at residues 35 to 136 (PTVH…VELK), 146 to 237 (PHVS…RNIE), and 249 to 357 (PVII…KEVS). 3 disulfide bridges follow: cysteine 42/cysteine 128, cysteine 64/cysteine 120, and cysteine 164/cysteine 219. Asparagine 124, asparagine 208, asparagine 231, and asparagine 289 each carry an N-linked (GlcNAc...) asparagine glycan. Cysteine 270 and cysteine 338 form a disulfide bridge. A helical membrane pass occupies residues 356–381 (VSSTFSWSIALAPLSLIILVVGAIWM). Residues 382 to 410 (RRRCKRRAGKTYGLTKLRTDNQDFPSSPN) lie on the Cytoplasmic side of the membrane.

Belongs to the interleukin-1 receptor family. Associates with IL1RAP to form a non-signaling interleukin-1 receptor complex. Post-translationally, a soluble form (sIL1R2) can also be produced by proteolytic cleavage at the cell surface (shedding) involving a metalloproteinase. Strongly expressed in B-cells, with levels 21 times higher than IL1R1. In T-cells expressed 5 times more compared with IL1R1.

It is found in the membrane. Its subcellular location is the cell membrane. The protein localises to the secreted. Functionally, non-signaling receptor for IL1A, IL1B and IL1RN. Reduces IL1B activities. Serves as a decoy receptor by competitive binding to IL1B and preventing its binding to IL1R1. Also modulates cellular response through non-signaling association with IL1RAP after binding to IL1B. IL1R2 (membrane and secreted forms) preferentially binds IL1B and poorly IL1A and IL1RN. The secreted IL1R2 recruits secreted IL1RAP with high affinity; this complex formation may be the dominant mechanism for neutralization of IL1B by secreted/soluble receptors. In Mus musculus (Mouse), this protein is Interleukin-1 receptor type 2 (Il1r2).